The sequence spans 453 residues: MTRRYFGTDGIRGTVGEAPITADFVLKLGWAMGRVLSRRTGRKSRAKVLIGKDTRISGYMFESALEAGLSAAGVDVSLLGPMPTPGIAYLTRTFRADAGIVISASHNPFQDNGIKFFSAEGVKLADAVEEEIEAELDLPLSTVAPDALGKALRIQDAAGRYIEFCKSTVPDRLTLEGLKVVLDCAHGATYHIAPSVLRELGAEVSLIGAEPDGLNINHGVGSTHPAALRAAVIERGADLGVALDGDGDRVVLVDAEGREVDGDDILYLIARDRRARDLLGGGVVGTLMSNFGLAAALEALDIPFERAKVGDRYVMERLAANGWQLGGESSGHIVCGHVQTTGDGIVSALQVLAIMVREGASLAALLQGFEKAPQALVNVRLTPETDKEALLGNEQVQHTVASVEAELGEEGRVLLRPSGTEPLIRVMVEGRPHFDVDALARRIADDIEGHMVR.

S105 (phosphoserine intermediate) is an active-site residue. Mg(2+)-binding residues include S105, D244, D246, and D248. S105 bears the Phosphoserine mark.

It belongs to the phosphohexose mutase family. It depends on Mg(2+) as a cofactor. Activated by phosphorylation.

It catalyses the reaction alpha-D-glucosamine 1-phosphate = D-glucosamine 6-phosphate. Catalyzes the conversion of glucosamine-6-phosphate to glucosamine-1-phosphate. The chain is Phosphoglucosamine mutase from Chromohalobacter salexigens (strain ATCC BAA-138 / DSM 3043 / CIP 106854 / NCIMB 13768 / 1H11).